The sequence spans 183 residues: Capsid protein (183 aa).

The segment at 136–183 (NAPILSTLPETTVVRRRGRSPRRRTPSPRRRRSQSPRRRRSQSRESQC) is disordered. The span at 149–176 (VRRRGRSPRRRTPSPRRRRSQSPRRRRS) shows a compositional bias: basic residues. Phosphoserine; by host is present on residues S155, S162, and S170. The 1; half-length repeat unit spans residues 155 to 161 (SPRRRTP). The segment at 155-177 (SPRRRTPSPRRRRSQSPRRRRSQ) is 3 X 8 AA repeats of S-P-R-R-R-[PR]-S-Q. The Bipartite nuclear localization signal motif lies at 158–175 (RRTPSPRRRRSQSPRRRR). A run of 2 repeats spans residues 162 to 169 (SPRRRRSQ) and 170 to 177 (SPRRRRSQ). The RNA binding stretch occupies residues 177–183 (QSRESQC).

It belongs to the orthohepadnavirus core antigen family. In terms of assembly, homodimerizes, then multimerizes. Interacts with cytosol exposed regions of viral L glycoprotein present in the reticulum-to-Golgi compartment. Interacts with human FLNB. Phosphorylated form interacts with host importin alpha; this interaction depends on the exposure of the NLS, which itself depends upon genome maturation and/or phosphorylation of the capsid protein. Interacts with host NUP153. Phosphorylated by host SRPK1, SRPK2, and maybe protein kinase C or GAPDH. Phosphorylation is critical for pregenomic RNA packaging. Protein kinase C phosphorylation is stimulated by HBx protein and may play a role in transport of the viral genome to the nucleus at the late step during the viral replication cycle.

The protein localises to the virion. It is found in the host cytoplasm. Functionally, self assembles to form an icosahedral capsid. Most capsids appear to be large particles with an icosahedral symmetry of T=4 and consist of 240 copies of capsid protein, though a fraction forms smaller T=3 particles consisting of 180 capsid proteins. Entering capsids are transported along microtubules to the nucleus. Phosphorylation of the capsid is thought to induce exposure of nuclear localization signal in the C-terminal portion of the capsid protein that allows binding to the nuclear pore complex via the importin (karyopherin-) alpha and beta. Capsids are imported in intact form through the nuclear pore into the nuclear basket, where it probably binds NUP153. Only capsids that contain the mature viral genome can release the viral DNA and capsid protein into the nucleoplasm. Immature capsids get stuck in the basket. Capsids encapsulate the pre-genomic RNA and the P protein. Pre-genomic RNA is reverse-transcribed into DNA while the capsid is still in the cytoplasm. The capsid can then either be directed to the nucleus, providing more genomes for transcription, or bud through the endoplasmic reticulum to provide new virions. The polypeptide is Capsid protein (Homo sapiens (Human)).